The following is a 399-amino-acid chain: Glucose-1-phosphate adenylyltransferase (399 aa).

Residues Gly158, 174–175 (EK), and Ser192 each bind alpha-D-glucose 1-phosphate.

Belongs to the bacterial/plant glucose-1-phosphate adenylyltransferase family. As to quaternary structure, homotetramer.

The enzyme catalyses alpha-D-glucose 1-phosphate + ATP + H(+) = ADP-alpha-D-glucose + diphosphate. Its pathway is glycan biosynthesis; glycogen biosynthesis. Its function is as follows. Involved in the biosynthesis of ADP-glucose, a building block required for the elongation reactions to produce glycogen. Catalyzes the reaction between ATP and alpha-D-glucose 1-phosphate (G1P) to produce pyrophosphate and ADP-Glc. The sequence is that of Glucose-1-phosphate adenylyltransferase from Streptomyces coelicolor (strain ATCC BAA-471 / A3(2) / M145).